Here is a 364-residue protein sequence, read N- to C-terminus: 3'(2'),5'-bisphosphate nucleotidase 1 (364 aa).

The Proton acceptor role is filled by aspartate 54. Glutamate 77, aspartate 141, isoleucine 143, and aspartate 144 together coordinate Mg(2+). Catalysis depends on threonine 146, which acts as the Proton acceptor. The adenosine 3',5'-bisphosphate site is built by threonine 146, histidine 243, serine 272, lysine 275, arginine 289, and aspartate 302. AMP is bound by residues histidine 243, serine 272, lysine 275, arginine 289, and aspartate 302. Aspartate 302 is a Mg(2+) binding site.

This sequence belongs to the inositol monophosphatase superfamily. The cofactor is Mg(2+).

The catalysed reaction is 3'-phosphoadenylyl sulfate + H2O = adenosine 5'-phosphosulfate + phosphate. It catalyses the reaction adenosine 3',5'-bisphosphate + H2O = AMP + phosphate. The enzyme catalyses adenosine 2',5'-bisphosphate + H2O = AMP + phosphate. Functionally, phosphatase that converts adenosine 3'-phosphate 5'-phosphosulfate (PAPS) to adenosine 5'-phosphosulfate (APS) and 3'(2')-phosphoadenosine 5'-phosphate (PAP) to AMP. Regulates the flux of sulfur in the sulfur-activation pathway by converting PAPS to APS. Involved in salt tolerance. This chain is 3'(2'),5'-bisphosphate nucleotidase 1 (HAL21), found in Candida albicans (strain SC5314 / ATCC MYA-2876) (Yeast).